Consider the following 613-residue polypeptide: Replication protein E1 (613 aa).

Residues 1 to 31 form a disordered region; sequence MDPNLKGITGQSFLDDQAECSESDNSEQGCE. Positions 16 to 31 are enriched in acidic residues; it reads DQAECSESDNSEQGCE. Positions 71–73 match the Nuclear localization signal motif; it reads KRK. Ser77 and Ser92 each carry phosphoserine; by host. The disordered stretch occupies residues 128 to 152; sequence YGSLASQSLSGQSQKNGKNRVNNGN. Over residues 129-152 the composition is skewed to low complexity; the sequence is GSLASQSLSGQSQKNGKNRVNNGN. A DNA-binding region region spans residues 150–317; sequence NGNKENIDCT…TSITHQIQED (168 aa). The region spanning 413-566 is the SF3 helicase domain; that stretch reads YQNINFLSFL…FPLDENGKPA (154 aa). An ATP-binding site is contributed by 442–449; the sequence is GPPNTGKS. Acidic residues predominate over residues 588–597; sequence TEPEDEDDGD. The segment at 588 to 613 is disordered; the sequence is TEPEDEDDGDPPSPFRCSARAAARDL.

It belongs to the papillomaviridae E1 protein family. Can form hexamers. Interacts with E2 protein; this interaction increases E1 DNA binding specificity. Interacts with host DNA polymerase subunit POLA2. Interacts with host single stranded DNA-binding protein RPA1. Interacts with host TOP1; this interaction stimulates the enzymatic activity of TOP1. In terms of processing, phosphorylated.

It localises to the host nucleus. It carries out the reaction Couples ATP hydrolysis with the unwinding of duplex DNA by translocating in the 3'-5' direction.. The enzyme catalyses ATP + H2O = ADP + phosphate + H(+). Its function is as follows. ATP-dependent DNA 3'-5' helicase required for initiation of viral DNA replication. It forms a complex with the viral E2 protein. The E1-E2 complex binds to the replication origin which contains binding sites for both proteins. During the initial step, a dimer of E1 interacts with a dimer of protein E2 leading to a complex that binds the viral origin of replication with high specificity. Then, a second dimer of E1 displaces the E2 dimer in an ATP-dependent manner to form the E1 tetramer. Following this, two E1 monomers are added to each half of the site, which results in the formation of two E1 trimers on the viral ori. Subsequently, two hexamers will be created. The double hexamer acts as a bi-directional helicase machinery and unwinds the viral DNA and then recruits the host DNA polymerase to start replication. This chain is Replication protein E1, found in Bos taurus (Bovine).